Here is a 319-residue protein sequence, read N- to C-terminus: Acetyl-coenzyme A carboxylase carboxyl transferase subunit alpha (319 aa).

Residues 35–296 enclose the CoA carboxyltransferase C-terminal domain; it reads NIDEEVHRLR…KAQLLADLAD (262 aa).

This sequence belongs to the AccA family. As to quaternary structure, acetyl-CoA carboxylase is a heterohexamer composed of biotin carboxyl carrier protein (AccB), biotin carboxylase (AccC) and two subunits each of ACCase subunit alpha (AccA) and ACCase subunit beta (AccD).

It is found in the cytoplasm. It catalyses the reaction N(6)-carboxybiotinyl-L-lysyl-[protein] + acetyl-CoA = N(6)-biotinyl-L-lysyl-[protein] + malonyl-CoA. It functions in the pathway lipid metabolism; malonyl-CoA biosynthesis; malonyl-CoA from acetyl-CoA: step 1/1. Its function is as follows. Component of the acetyl coenzyme A carboxylase (ACC) complex. First, biotin carboxylase catalyzes the carboxylation of biotin on its carrier protein (BCCP) and then the CO(2) group is transferred by the carboxyltransferase to acetyl-CoA to form malonyl-CoA. This chain is Acetyl-coenzyme A carboxylase carboxyl transferase subunit alpha, found in Escherichia coli O127:H6 (strain E2348/69 / EPEC).